The sequence spans 231 residues: Septum site-determining protein MinC (231 aa).

Belongs to the MinC family. As to quaternary structure, interacts with MinD and FtsZ.

Functionally, cell division inhibitor that blocks the formation of polar Z ring septums. Rapidly oscillates between the poles of the cell to destabilize FtsZ filaments that have formed before they mature into polar Z rings. Prevents FtsZ polymerization. This chain is Septum site-determining protein MinC, found in Shigella flexneri.